The following is a 338-amino-acid chain: GTPase Obg (338 aa).

The 159-residue stretch at 1–159 (MQFIDEVKIH…RWLRLELKLM (159 aa)) folds into the Obg domain. The tract at residues 66 to 91 (KAGRGKNGMGKDRHGANGDDLTIPVP) is disordered. The OBG-type G domain maps to 160 to 331 (ADVGLLGFPN…LLDEIARHLW (172 aa)). GTP contacts are provided by residues 166–173 (GFPNVGKS), 191–195 (FTTIK), 213–216 (DIPG), 283–286 (NKID), and 312–314 (SAA). Mg(2+) is bound by residues S173 and T193.

Belongs to the TRAFAC class OBG-HflX-like GTPase superfamily. OBG GTPase family. In terms of assembly, monomer. It depends on Mg(2+) as a cofactor.

The protein resides in the cytoplasm. In terms of biological role, an essential GTPase which binds GTP, GDP and possibly (p)ppGpp with moderate affinity, with high nucleotide exchange rates and a fairly low GTP hydrolysis rate. Plays a role in control of the cell cycle, stress response, ribosome biogenesis and in those bacteria that undergo differentiation, in morphogenesis control. This is GTPase Obg from Geobacter metallireducens (strain ATCC 53774 / DSM 7210 / GS-15).